Reading from the N-terminus, the 635-residue chain is Threonine--tRNA ligase (635 aa).

A TGS domain is found at 1 to 61; the sequence is MINIKFPDGS…NHDCELRLIT (61 aa). Residues 242 to 533 form a catalytic region; it reads DHRKIGKALD…LIEHYAGNMP (292 aa). Cys333, His384, and His510 together coordinate Zn(2+).

The protein belongs to the class-II aminoacyl-tRNA synthetase family. Homodimer. Zn(2+) serves as cofactor.

Its subcellular location is the cytoplasm. It catalyses the reaction tRNA(Thr) + L-threonine + ATP = L-threonyl-tRNA(Thr) + AMP + diphosphate + H(+). Catalyzes the attachment of threonine to tRNA(Thr) in a two-step reaction: L-threonine is first activated by ATP to form Thr-AMP and then transferred to the acceptor end of tRNA(Thr). Also edits incorrectly charged L-seryl-tRNA(Thr). This chain is Threonine--tRNA ligase, found in Francisella philomiragia subsp. philomiragia (strain ATCC 25017 / CCUG 19701 / FSC 153 / O#319-036).